We begin with the raw amino-acid sequence, 308 residues long: Protein translocase subunit SecF (308 aa).

The next 6 membrane-spanning stretches (helical) occupy residues 23-42, 140-160, 164-184, 194-214, 246-266, and 272-292; these read VSYSFSIILSLISLIWIGIY, IEAGAMAMLFSFLAIMVYIGV, WYFGFGILIALVHDVILALGF, LSTIAAVLTIIGYSVNDSVVI, ILTVITTLLANLALILFGGKA, and VLVFFGIIAGTYSSIFISAPI.

Belongs to the SecD/SecF family. SecF subfamily. In terms of assembly, forms a complex with SecD. Part of the essential Sec protein translocation apparatus which comprises SecA, SecYEG and auxiliary proteins SecDF-YajC and YidC.

It localises to the cell inner membrane. Its function is as follows. Part of the Sec protein translocase complex. Interacts with the SecYEG preprotein conducting channel. SecDF uses the proton motive force (PMF) to complete protein translocation after the ATP-dependent function of SecA. In Rickettsia typhi (strain ATCC VR-144 / Wilmington), this protein is Protein translocase subunit SecF.